The primary structure comprises 81 residues: Albumin-1 (81 aa).

Positions 27–34 (LSSVAKMI) are excised as a propeptide.

Post-translationally, three disulfide bonds are probably present. In terms of processing, the C-terminal glycine may be removed from A1b.

A1b binds to basic 7S globulin (BG) and stimulates its phosphorylation activity. The sequence is that of Albumin-1 (LEG1) from Lupinus angustifolius (Narrow-leaved blue lupine).